The chain runs to 163 residues: Secreted RxLR effector protein 135 (163 aa).

The signal sequence occupies residues 1 to 20; the sequence is MRRLYLFVLILATFLTTSHG. Positions 33-45 match the RxLR-dEER motif; the sequence is RGLQEEAGEDEER. Residues 94 to 127 form a disordered region; it reads KNAGKPKRQTPQIAATGPAKPKVQSPEEAAAVPG.

Belongs to the RxLR effector family.

Its subcellular location is the secreted. It is found in the host nucleus. The protein resides in the host cytoplasm. Its function is as follows. Secreted effector that completely suppresses the host cell death induced by cell death-inducing proteins. This chain is Secreted RxLR effector protein 135, found in Plasmopara viticola (Downy mildew of grapevine).